Here is a 97-residue protein sequence, read N- to C-terminus: Co-chaperonin GroES (97 aa).

The protein belongs to the GroES chaperonin family. In terms of assembly, heptamer of 7 subunits arranged in a ring. Interacts with the chaperonin GroEL.

Its subcellular location is the cytoplasm. In terms of biological role, together with the chaperonin GroEL, plays an essential role in assisting protein folding. The GroEL-GroES system forms a nano-cage that allows encapsulation of the non-native substrate proteins and provides a physical environment optimized to promote and accelerate protein folding. GroES binds to the apical surface of the GroEL ring, thereby capping the opening of the GroEL channel. This chain is Co-chaperonin GroES, found in Pseudomonas entomophila (strain L48).